The chain runs to 406 residues: Betaine--homocysteine S-methyltransferase 1 (406 aa).

Residues 11–314 (KGILERLNAG…YHIRAIAEEL (304 aa)) enclose the Hcy-binding domain. N6-succinyllysine is present on residues Lys40, Lys93, and Lys98. A Zn(2+)-binding site is contributed by Cys217. Residues Lys232 and Lys241 each carry the N6-succinyllysine modification. Residues Cys299 and Cys300 each coordinate Zn(2+). Ser330 bears the Phosphoserine mark. Lys340 and Lys377 each carry N6-succinyllysine.

In terms of assembly, homotetramer. Zn(2+) is required as a cofactor.

It is found in the cytoplasm. The protein resides in the cytosol. Its subcellular location is the nucleus. The enzyme catalyses L-homocysteine + glycine betaine = N,N-dimethylglycine + L-methionine. The protein operates within amine and polyamine degradation; betaine degradation; sarcosine from betaine: step 1/2. It functions in the pathway amino-acid biosynthesis; L-methionine biosynthesis via de novo pathway; L-methionine from L-homocysteine (BhmT route): step 1/1. Functionally, involved in the regulation of homocysteine metabolism. Converts betaine and homocysteine to dimethylglycine and methionine, respectively. This reaction is also required for the irreversible oxidation of choline. This chain is Betaine--homocysteine S-methyltransferase 1 (BHMT), found in Pongo abelii (Sumatran orangutan).